The following is a 185-amino-acid chain: Ribosome maturation factor RimP (185 aa).

The interval 162–185 (VRLERAADGAPERGGDRGDTEESR) is disordered.

This sequence belongs to the RimP family.

It localises to the cytoplasm. In terms of biological role, required for maturation of 30S ribosomal subunits. This Saccharopolyspora erythraea (strain ATCC 11635 / DSM 40517 / JCM 4748 / NBRC 13426 / NCIMB 8594 / NRRL 2338) protein is Ribosome maturation factor RimP.